Consider the following 469-residue polypeptide: 3-isopropylmalate dehydratase large subunit (469 aa).

C349, C410, and C413 together coordinate [4Fe-4S] cluster.

It belongs to the aconitase/IPM isomerase family. LeuC type 1 subfamily. As to quaternary structure, heterodimer of LeuC and LeuD. Requires [4Fe-4S] cluster as cofactor.

The catalysed reaction is (2R,3S)-3-isopropylmalate = (2S)-2-isopropylmalate. It functions in the pathway amino-acid biosynthesis; L-leucine biosynthesis; L-leucine from 3-methyl-2-oxobutanoate: step 2/4. In terms of biological role, catalyzes the isomerization between 2-isopropylmalate and 3-isopropylmalate, via the formation of 2-isopropylmaleate. The sequence is that of 3-isopropylmalate dehydratase large subunit from Neisseria meningitidis serogroup B (strain ATCC BAA-335 / MC58).